The chain runs to 145 residues: 3-hydroxyacyl-[acyl-carrier-protein] dehydratase FabZ (145 aa).

His51 is an active-site residue.

This sequence belongs to the thioester dehydratase family. FabZ subfamily.

It is found in the cytoplasm. It catalyses the reaction a (3R)-hydroxyacyl-[ACP] = a (2E)-enoyl-[ACP] + H2O. Involved in unsaturated fatty acids biosynthesis. Catalyzes the dehydration of short chain beta-hydroxyacyl-ACPs and long chain saturated and unsaturated beta-hydroxyacyl-ACPs. The chain is 3-hydroxyacyl-[acyl-carrier-protein] dehydratase FabZ from Staphylococcus carnosus (strain TM300).